The following is a 293-amino-acid chain: LNECKQLNENQVRTLCEKAKEILTKESNVQEVRCPVTVCGDVHGQFHDLMELFRIGGKSPDTNYLFMGDYVDRGYYSVETVTLLVALKVRYPERITILRGNHESRQITQVYGFYDECLRKYGNANVWKYFTDLFDYLPLTALVDGQIFCLHGGLSPSIDTLDHIRALDRLQEVPHEGPMCDLLWSDPDDRGGWGISPRGAGYTFGQDISETFNHANGLTLVSRAHQLVMEGYNWCHDRNVVTIFSAPNYCYRCGNQAAIMELDDTLKYSFLQFDPAPRRGEPHVTRRTPDYFL.

Mn(2+) is bound by residues aspartate 41, histidine 43, aspartate 69, and asparagine 101. The active-site Proton donor is histidine 102. Residues histidine 151 and histidine 225 each coordinate Mn(2+). A Phosphotyrosine modification is found at tyrosine 291. Leucine 293 bears the Leucine methyl ester mark.

The protein belongs to the PPP phosphatase family. PP-1 subfamily. Found in a complex with at least ARL2, PPP2CB, PPP2R1A, PPP2R2A, PPP2R5E and TBCD. Interacts with TBCD. PP2A consists of a common heterodimeric core enzyme (composed of a 36 kDa catalytic subunit (subunit C) and a 65 kDa constant regulatory subunit (PR65) (subunit A)) that associates with a variety of regulatory subunits. Proteins that associate with the core dimer include three families of regulatory subunits B (the R2/B/PR55/B55, R3/B''/PR72/PR130/PR59 and R5/B'/B56 families), the 48 kDa variable regulatory subunit, viral proteins, and cell signaling molecules. Binds PPME1. May indirectly interact with SGO1, most probably through regulatory B56 subunits. Interacts with CTTNBP2NL. Interacts with PTPA. Part of the core of STRIPAK complexes composed of PP2A catalytic and scaffolding subunits, the striatins (PP2A regulatory subunits), the striatin-associated proteins MOB4, STRIP1 and STRIP2, PDCD10 and members of the STE20 kinases, such as STK24 and STK26. It depends on Mn(2+) as a cofactor. In terms of processing, reversibly methyl esterified on Leu-293 by leucine carboxyl methyltransferase 1 (Lcmt1) and protein phosphatase methylesterase 1 (PPME1). Carboxyl methylation influences the affinity of the catalytic subunit for the different regulatory subunits, thereby modulating the PP2A holoenzyme's substrate specificity, enzyme activity and cellular localization. Phosphorylation of either threonine (by autophosphorylation-activated protein kinase) or tyrosine results in inactivation of the phosphatase. Auto-dephosphorylation has been suggested as a mechanism for reactivation. Post-translationally, may be monoubiquitinated by NOSIP.

It localises to the cytoplasm. It is found in the nucleus. The protein localises to the chromosome. Its subcellular location is the centromere. The protein resides in the cytoskeleton. It localises to the spindle pole. The enzyme catalyses O-phospho-L-seryl-[protein] + H2O = L-seryl-[protein] + phosphate. It catalyses the reaction O-phospho-L-threonyl-[protein] + H2O = L-threonyl-[protein] + phosphate. Catalytic subunit of protein phosphatase 2A (PP2A), a serine/threonine phosphatase involved in the regulation of a wide variety of enzymes, signal transduction pathways, and cellular events. PP2A can modulate the activity of phosphorylase B kinase, casein kinase 2, mitogen-stimulated S6 kinase, and MAP-2 kinase. Part of the striatin-interacting phosphatase and kinase (STRIPAK) complexes. STRIPAK complexes have critical roles in protein (de)phosphorylation and are regulators of multiple signaling pathways including Hippo, MAPK, nuclear receptor and cytoskeleton remodeling. Different types of STRIPAK complexes are involved in a variety of biological processes such as cell growth, differentiation, apoptosis, metabolism and immune regulation. The polypeptide is Serine/threonine-protein phosphatase 2A catalytic subunit beta isoform (PPP2CB) (Sus scrofa (Pig)).